The sequence spans 235 residues: Small ribosomal subunit protein eS4 (235 aa).

Residues 37 to 100 (LPLGIIIRDI…NETYRMFQDE (64 aa)) enclose the S4 RNA-binding domain.

The protein belongs to the eukaryotic ribosomal protein eS4 family.

In Methanosarcina barkeri (strain Fusaro / DSM 804), this protein is Small ribosomal subunit protein eS4.